The sequence spans 176 residues: Interleukin-19 (176 aa).

An N-terminal signal peptide occupies residues M1–S24. Intrachain disulfides connect C28-C120, C74-C126, and C75-C128. Residue N56 is glycosylated (N-linked (GlcNAc...) asparagine). N-linked (GlcNAc...) asparagine glycans are attached at residues N127 and N134.

This sequence belongs to the IL-10 family.

Its subcellular location is the secreted. In terms of biological role, cytokine that functions as an anti-inflammatory and proangiogenic factor. Polarizes adaptive immunity to an anti-inflammatory phenotype through induction of T-helper 2 responses by both down-regulation of IFN-gamma and up-regulation of IL4 and IL5. Produced by osteocytes, stimulates granulopoiesis and neutrophil formation. Exerts its biological effect through a receptor complex consisting of a heterodimer of IL20RA and IL20RB. In turn, activates the Janus kinase (JAK) and signal transducer and activator of transcription (STAT) pathway, and importantly, STAT3. The protein is Interleukin-19 (Il19) of Mus musculus (Mouse).